Consider the following 440-residue polypeptide: tRNA(Ile)-lysidine synthase (440 aa).

Serine 25–serine 30 contributes to the ATP binding site.

This sequence belongs to the tRNA(Ile)-lysidine synthase family.

It localises to the cytoplasm. The enzyme catalyses cytidine(34) in tRNA(Ile2) + L-lysine + ATP = lysidine(34) in tRNA(Ile2) + AMP + diphosphate + H(+). Its function is as follows. Ligates lysine onto the cytidine present at position 34 of the AUA codon-specific tRNA(Ile) that contains the anticodon CAU, in an ATP-dependent manner. Cytidine is converted to lysidine, thus changing the amino acid specificity of the tRNA from methionine to isoleucine. The protein is tRNA(Ile)-lysidine synthase of Vibrio cholerae serotype O1 (strain ATCC 39315 / El Tor Inaba N16961).